The primary structure comprises 1365 residues: Polyprotein ABA-1 (1365 aa).

Belongs to the NPA family. Post-translationally, nematode polyprotein allergens (NPAs) are synthesized as large polypeptides that are subsequently proteolytically cleaved to active polypeptide units. In terms of tissue distribution, pseudocoelomic fluid.

In terms of biological role, has high binding affinity for fatty acids and retinoids. This is Polyprotein ABA-1 (ABA-1) from Ascaris suum (Pig roundworm).